A 98-amino-acid polypeptide reads, in one-letter code: NADH-ubiquinone oxidoreductase chain 4L (98 aa).

A run of 3 helical transmembrane segments spans residues 1-21, 29-49, and 61-81; these read MSIT…GMFV, SLLC…IVSL, and VILL…LIMV.

This sequence belongs to the complex I subunit 4L family. In terms of assembly, core subunit of respiratory chain NADH dehydrogenase (Complex I) which is composed of 45 different subunits.

It localises to the mitochondrion inner membrane. The catalysed reaction is a ubiquinone + NADH + 5 H(+)(in) = a ubiquinol + NAD(+) + 4 H(+)(out). Core subunit of the mitochondrial membrane respiratory chain NADH dehydrogenase (Complex I) which catalyzes electron transfer from NADH through the respiratory chain, using ubiquinone as an electron acceptor. Part of the enzyme membrane arm which is embedded in the lipid bilayer and involved in proton translocation. This Ochotona princeps (Southern American pika) protein is NADH-ubiquinone oxidoreductase chain 4L (MT-ND4L).